A 578-amino-acid polypeptide reads, in one-letter code: Probable arginine--tRNA ligase, mitochondrial (578 aa).

A mitochondrion-targeting transit peptide spans 1–16 (MACGFRRAIACQLSRV). L-arginine-binding positions include 133–135 (SPN), histidine 144, tyrosine 322, aspartate 326, and glutamine 350. A 'HIGH' region motif is present at residues 133–144 (SPNVAKKFHVGH). Lysine 568 bears the N6-acetyllysine mark.

The protein belongs to the class-I aminoacyl-tRNA synthetase family.

It localises to the mitochondrion membrane. The catalysed reaction is tRNA(Arg) + L-arginine + ATP = L-arginyl-tRNA(Arg) + AMP + diphosphate. In terms of biological role, catalyzes the attachment of arginine to tRNA(Arg) in a two-step reaction: arginine is first activated by ATP to form Arg-AMP and then transferred to the acceptor end of tRNA(Arg). In Pongo abelii (Sumatran orangutan), this protein is Probable arginine--tRNA ligase, mitochondrial (RARS2).